Consider the following 285-residue polypeptide: 3-methyl-2-oxobutanoate hydroxymethyltransferase (285 aa).

Residues 1–22 are disordered; the sequence is MSEHNVYGAAQPAQPGQPAQPR. Residues 8–21 are compositionally biased toward low complexity; it reads GAAQPAQPGQPAQP. Mg(2+) is bound by residues D66 and D105. Residues 66 to 67, D105, and K135 each bind 3-methyl-2-oxobutanoate; that span reads DS. E137 serves as a coordination point for Mg(2+). E203 serves as the catalytic Proton acceptor.

This sequence belongs to the PanB family. In terms of assembly, homodecamer; pentamer of dimers. Mg(2+) serves as cofactor.

It is found in the cytoplasm. It carries out the reaction 3-methyl-2-oxobutanoate + (6R)-5,10-methylene-5,6,7,8-tetrahydrofolate + H2O = 2-dehydropantoate + (6S)-5,6,7,8-tetrahydrofolate. It functions in the pathway cofactor biosynthesis; (R)-pantothenate biosynthesis; (R)-pantoate from 3-methyl-2-oxobutanoate: step 1/2. In terms of biological role, catalyzes the reversible reaction in which hydroxymethyl group from 5,10-methylenetetrahydrofolate is transferred onto alpha-ketoisovalerate to form ketopantoate. This is 3-methyl-2-oxobutanoate hydroxymethyltransferase from Mycolicibacterium paratuberculosis (strain ATCC BAA-968 / K-10) (Mycobacterium paratuberculosis).